We begin with the raw amino-acid sequence, 274 residues long: Bis(5'-nucleosyl)-tetraphosphatase, symmetrical (274 aa).

The protein belongs to the Ap4A hydrolase family.

It carries out the reaction P(1),P(4)-bis(5'-adenosyl) tetraphosphate + H2O = 2 ADP + 2 H(+). Functionally, hydrolyzes diadenosine 5',5'''-P1,P4-tetraphosphate to yield ADP. This chain is Bis(5'-nucleosyl)-tetraphosphatase, symmetrical, found in Erwinia tasmaniensis (strain DSM 17950 / CFBP 7177 / CIP 109463 / NCPPB 4357 / Et1/99).